The following is a 437-amino-acid chain: FK506-binding protein 3 (437 aa).

Composition is skewed to acidic residues over residues 73 to 90, 106 to 131, and 179 to 220; these read DIEA…EEEE, EEEE…EDVS, and ADED…DASD. 2 disordered regions span residues 73-132 and 169-349; these read DIEA…DVSE and HLTG…QTAK. Composition is skewed to basic and acidic residues over residues 256–270 and 292–324; these read KKED…KDLE and AKKE…EASK. The PPIase FKBP-type domain maps to 351 to 437; sequence GNKVGIRYIG…TFDIKLVSIK (87 aa).

The protein belongs to the FKBP-type PPIase family. FKBP3/4 subfamily.

It is found in the nucleus. The protein localises to the nucleolus. The enzyme catalyses [protein]-peptidylproline (omega=180) = [protein]-peptidylproline (omega=0). Inhibited by both FK506 and rapamycin. PPIases accelerate the folding of proteins. It catalyzes the cis-trans isomerization of proline imidic peptide bonds in oligopeptides. The sequence is that of FK506-binding protein 3 (FPR3) from Debaryomyces hansenii (strain ATCC 36239 / CBS 767 / BCRC 21394 / JCM 1990 / NBRC 0083 / IGC 2968) (Yeast).